The sequence spans 257 residues: Probable septum site-determining protein MinC (257 aa).

Residues 123–141 are compositionally biased toward low complexity; that stretch reads AVEAAAAPAAEPTPEPGAA. The segment at 123 to 144 is disordered; that stretch reads AVEAAAAPAAEPTPEPGAASQP.

Belongs to the MinC family. As to quaternary structure, interacts with MinD and FtsZ.

Its function is as follows. Cell division inhibitor that blocks the formation of polar Z ring septums. Rapidly oscillates between the poles of the cell to destabilize FtsZ filaments that have formed before they mature into polar Z rings. Prevents FtsZ polymerization. The chain is Probable septum site-determining protein MinC from Burkholderia multivorans (strain ATCC 17616 / 249).